A 203-amino-acid chain; its full sequence is SOSS complex subunit B1-A (203 aa).

Positions 22–92 (IVLETGRVTK…TLYTGRGGDL (71 aa)) form a DNA-binding region, OB. The segment at 110-203 (EPNPEYIAQQ…GKESRRTGKR (94 aa)) is disordered. Low complexity predominate over residues 118–140 (QQSQSKQGQQESGTGTNNHNSSS). Over residues 149–182 (ENGNGSNSSGPPAHQSTAPAHSASGRITRSQPNH) the composition is skewed to polar residues.

It belongs to the SOSS-B family. SOSS-B1 subfamily. As to quaternary structure, component of the SOSS complex, composed of soss-b (soss-b1/nabp2 or soss-b2/nabp1), soss-a/ints3 and soss-c/inip. SOSS complexes containing soss-b1/nabp2 are more abundant than complexes containing soss-b2/nabp1.

The protein resides in the nucleus. In terms of biological role, component of the SOSS complex, a multiprotein complex that functions downstream of the MRN complex to promote DNA repair and G2/M checkpoint. In the SOSS complex, acts as a sensor of single-stranded DNA that binds to single-stranded DNA. The SOSS complex associates with DNA lesions and influences diverse endpoints in the cellular DNA damage response including cell-cycle checkpoint activation, recombinational repair and maintenance of genomic stability. Required for efficient homologous recombination-dependent repair of double-strand breaks (DSBs). In Xenopus laevis (African clawed frog), this protein is SOSS complex subunit B1-A (nabp2-a).